Here is a 737-residue protein sequence, read N- to C-terminus: MSQQLQEIEKVLSSHKLSGDDYAHIKQILGREPNLVEIGIFSAMWSEHCSYKSSKVHLSGFPTKAPWVIQGPGENAGVIDIGGGYAAVFKMESHNHPSFIEPYQGAATGVGGIMRDVFTMGARPIANLNALRFGDVLKDNKTSAHQRYLVRGVVAGIGGYGNCMGVPTIGGETSFDECYNGNILVNAFTLGLAKSDEIFYGRADGIGNPVIYVGAKTGRDGLGGAVMSSDSFTEESKSLRPTVQVGDPFTEKLLLEACLELFKTDHVVGIQDMGAAGLTSSSFEMAGRSGSGMIMHLDRVPAREEGMTPYDFMLSESQERMLLCAKKGSEAEIIKIFEKWDLDAAVIGEVTATGNMELFWHGDKVAEVPVNPVSEEAPVLNRPMSRPAYLDKIASVTIDDFARVPNQEAFERLTKSMEVVDKSWIYTQYDSMVQTNTIKKGGMLDASVVRVKENGKALAMSADCNVRYCYIDPKGGAAAAVIESGRNVAMSGARPLAITDCLNFGNPENPEVMWQFGQSCLGIKEACSALTTPVIGGNVSLYNETNGVSVFPTPSIATVGVNDDQNKVLMSSFQGEGNTLYLVGESNSEFGGSLYMKEICGVVAGVLPEIDYEKELTLWDLVIEANKKGILECAKDASSGGVAIALAKMAAVSGLGCSARMLVNDERDIFAESMSRAIIEVKQENSASFESMAGVLQCQKLGTVGGDIVKINNVSMSMKELQDNYFNTFKRVIERDI.

The active site involves H48. Residues Y51 and K90 each contribute to the ATP site. A Mg(2+)-binding site is contributed by E92. Substrate is bound by residues 93 to 96 and R115; that span reads SHNH. The Proton acceptor role is filled by H94. D116 serves as a coordination point for Mg(2+). Q244 contributes to the substrate binding site. Position 272 (D272) interacts with Mg(2+). 316–318 serves as a coordination point for substrate; the sequence is ESQ. Positions 500 and 537 each coordinate ATP. N538 serves as a coordination point for Mg(2+). S540 lines the substrate pocket.

This sequence belongs to the FGAMS family. In terms of assembly, monomer. Part of the FGAM synthase complex composed of 1 PurL, 1 PurQ and 2 PurS subunits.

The protein resides in the cytoplasm. It catalyses the reaction N(2)-formyl-N(1)-(5-phospho-beta-D-ribosyl)glycinamide + L-glutamine + ATP + H2O = 2-formamido-N(1)-(5-O-phospho-beta-D-ribosyl)acetamidine + L-glutamate + ADP + phosphate + H(+). It participates in purine metabolism; IMP biosynthesis via de novo pathway; 5-amino-1-(5-phospho-D-ribosyl)imidazole from N(2)-formyl-N(1)-(5-phospho-D-ribosyl)glycinamide: step 1/2. In terms of biological role, part of the phosphoribosylformylglycinamidine synthase complex involved in the purines biosynthetic pathway. Catalyzes the ATP-dependent conversion of formylglycinamide ribonucleotide (FGAR) and glutamine to yield formylglycinamidine ribonucleotide (FGAM) and glutamate. The FGAM synthase complex is composed of three subunits. PurQ produces an ammonia molecule by converting glutamine to glutamate. PurL transfers the ammonia molecule to FGAR to form FGAM in an ATP-dependent manner. PurS interacts with PurQ and PurL and is thought to assist in the transfer of the ammonia molecule from PurQ to PurL. The chain is Phosphoribosylformylglycinamidine synthase subunit PurL from Sulfurimonas denitrificans (strain ATCC 33889 / DSM 1251) (Thiomicrospira denitrificans (strain ATCC 33889 / DSM 1251)).